Consider the following 27-residue polypeptide: AnmTX Sco 9a-1 (27 aa).

Residue Pro6 is modified to Hydroxyproline. Disulfide bonds link Cys7–Cys18 and Cys10–Cys25.

Its function is as follows. Has analgesic and anti-inflammatory activity in vivo. At a dose of 0.1 and 1 mg/kg, exhibits anti-inflammatory activity by reducing the volume of edema during 24 h better than the nonsteroidal anti-inflammatory drug, Diclofenac, at dose of 1 mg/kg in a mouse model of acute local lambda-carrageenan-induced inflammation. At a dose of 1 mg/kg, reduces the content of tumor necrosis factor-alpha (TNF-alpha). Demonstrates a significant analgesic effect on acute pain sensitivity in the carrageenan-induced thermal hyperalgesia model at doses of 0.1 and 1 mg/kg. Not toxic in mice, however stimulates exploratory motivation and active search behavior, and demonstrates an anti-anxiety effect. Does not exhibit any effect on currents of rat acid-sensing ion channels ASIC1a or ASIC3. In Stomphia coccinea (Spotted swimming anemone), this protein is AnmTX Sco 9a-1.